Here is a 91-residue protein sequence, read N- to C-terminus: B3 domain-containing protein Os03g0164300 (91 aa).

Residues 1-91 constitute a DNA-binding region (TF-B3); sequence MTNAKMTFAV…VLVLKVHVLK (91 aa).

The protein localises to the nucleus. The protein is B3 domain-containing protein Os03g0164300 of Oryza sativa subsp. japonica (Rice).